A 270-amino-acid chain; its full sequence is Putative phosphoenolpyruvate synthase regulatory protein (270 aa).

Residue 150–157 participates in ADP binding; that stretch reads GVSRCGKT.

The protein belongs to the pyruvate, phosphate/water dikinase regulatory protein family. PSRP subfamily.

It catalyses the reaction [pyruvate, water dikinase] + ADP = [pyruvate, water dikinase]-phosphate + AMP + H(+). The catalysed reaction is [pyruvate, water dikinase]-phosphate + phosphate + H(+) = [pyruvate, water dikinase] + diphosphate. Its function is as follows. Bifunctional serine/threonine kinase and phosphorylase involved in the regulation of the phosphoenolpyruvate synthase (PEPS) by catalyzing its phosphorylation/dephosphorylation. This Shewanella woodyi (strain ATCC 51908 / MS32) protein is Putative phosphoenolpyruvate synthase regulatory protein.